We begin with the raw amino-acid sequence, 176 residues long: uncharacterized protein (176 aa).

Residues 71–176 (RDDMSSDSDG…YSTDDDEDDY (106 aa)) form a disordered region. 2 stretches are compositionally biased toward low complexity: residues 77 to 87 (DSDGPAASPPG) and 100 to 109 (SYSSSDSSAR). The segment covering 140 to 152 (KARRPARKKKRIG) has biased composition (basic residues).

This is an uncharacterized protein from Orgyia pseudotsugata multicapsid polyhedrosis virus (OpMNPV).